A 269-amino-acid chain; its full sequence is Aquaporin-1 (269 aa).

Topologically, residues 1 to 11 are cytoplasmic; that stretch reads MASEFKKKLFW. Residues 12–29 form a helical membrane-spanning segment; that stretch reads RAVVAEFLAMTLFVFISI. Topologically, residues 30–46 are extracellular; the sequence is GSALGFKYPVGNNQTAV. Residue Asn-42 is glycosylated (N-linked (GlcNAc...) asparagine). Residues 47–65 traverse the membrane as a helical segment; that stretch reads QDNVKVSLAFGLSIATLAQ. Topologically, residues 66 to 68 are cytoplasmic; the sequence is SVG. The stretch at 69-82 is an intramembrane region; it reads HISGAHLNPAVTLG. The short motif at 76-78 is the NPA 1 element; sequence NPA. Over 83–90 the chain is Cytoplasmic; sequence LLLSCQIS. Residues 91–109 form a helical membrane-spanning segment; sequence IFRALMYIIAQCVGAIVAT. At 110-133 the chain is on the extracellular side; it reads AILSGITSSLPGNSLGRNDLADGV. Residues 134-153 form a helical membrane-spanning segment; sequence NSGQGLGIEIIGTLQLVLCV. At 154-163 the chain is on the cytoplasmic side; the sequence is LATTDRRRRD. A helical membrane pass occupies residues 164–181; that stretch reads LGGSAPLAIGLSVALGHL. At 182–186 the chain is on the extracellular side; that stretch reads LAIDY. The stretch at 187–199 is an intramembrane region; the sequence is TGCGINPARSFGS. An NPA 2 motif is present at residues 192 to 194; sequence NPA. Residues 200-206 lie on the Extracellular side of the membrane; that stretch reads AVITHNF. Residue Asn-205 is glycosylated (N-linked (GlcNAc...) asparagine). A helical membrane pass occupies residues 207–224; sequence SNHWIFWVGPFIGGALAV. Over 225 to 269 the chain is Cytoplasmic; the sequence is LIYDFILAPRSSDFTDRVKVWTSGQVEEYDLDADDINSRVEMKPK. Phosphoserine is present on Ser-247. Phosphotyrosine is present on Tyr-253. Position 262 is a phosphoserine (Ser-262).

It belongs to the MIP/aquaporin (TC 1.A.8) family. In terms of assembly, homotetramer; each monomer provides an independent water pore. Component of the ankyrin-1 complex in the erythrocyte, composed of ANK1, RHCE, RHAG, SLC4A1, EPB42, GYPA, GYPB and AQP1. Interacts with EPHB2; involved in endolymph production in the inner ear. Identified in a complex with STOM. Interacts (via the N-terminal) with ANK1 (via ANK 1-5 repeats). Interacts (via the C-terminal) with EPB42.

The protein localises to the cell membrane. It carries out the reaction H2O(in) = H2O(out). The catalysed reaction is nitric oxide(out) = nitric oxide(in). The enzyme catalyses CO2(out) = CO2(in). It catalyses the reaction glycerol(in) = glycerol(out). It carries out the reaction H2O2(out) = H2O2(in). The catalysed reaction is K(+)(in) = K(+)(out). The enzyme catalyses Na(+)(in) = Na(+)(out). Forms a water channel that facilitates the transport of water across cell membranes, playing a crucial role in water homeostasis in various tissues. Could also be permeable to small solutes including hydrogen peroxide, glycerol and gases such as amonnia (NH3), nitric oxide (NO) and carbon dioxide (CO2). Recruited to the ankyrin-1 complex, a multiprotein complex of the erythrocyte membrane, it could be part of a CO2 metabolon, linking facilitated diffusion of CO2 across the membrane, anion exchange of Cl(-)/HCO3(-) and interconversion of dissolved CO2 and carbonic acid in the cytosol. In vitro, it shows non-selective gated cation channel activity and may be permeable to cations like K(+) and Na(+) in vivo. The sequence is that of Aquaporin-1 from Pongo abelii (Sumatran orangutan).